We begin with the raw amino-acid sequence, 216 residues long: Adenylate kinase (216 aa).

11–16 (GSGKGT) contributes to the ATP binding site. Residues 31–60 (ATGDLFRKAIERGDELGDTVKSYMERGELV) form an NMP region. Residues T32, R37, 58–60 (ELV), 86–89 (GFPR), and Q93 contribute to the AMP site. The tract at residues 127–163 (GRWVCRSCQSPYQCGCAEVAEGKCSRCQGELYQRPDD) is LID. R128 is an ATP binding site. Zn(2+)-binding residues include C131, C134, C150, and C153. Residues R160 and R171 each coordinate AMP. A199 contributes to the ATP binding site.

This sequence belongs to the adenylate kinase family. Monomer.

It localises to the cytoplasm. It catalyses the reaction AMP + ATP = 2 ADP. Its pathway is purine metabolism; AMP biosynthesis via salvage pathway; AMP from ADP: step 1/1. Functionally, catalyzes the reversible transfer of the terminal phosphate group between ATP and AMP. Plays an important role in cellular energy homeostasis and in adenine nucleotide metabolism. The protein is Adenylate kinase of Dehalococcoides mccartyi (strain ATCC BAA-2266 / KCTC 15142 / 195) (Dehalococcoides ethenogenes (strain 195)).